Consider the following 421-residue polypeptide: 3-phosphoshikimate 1-carboxyvinyltransferase (421 aa).

3-phosphoshikimate is bound by residues lysine 21, serine 22, and arginine 26. Phosphoenolpyruvate is bound at residue lysine 21. Residues glycine 93 and arginine 121 each coordinate phosphoenolpyruvate. 3-phosphoshikimate contacts are provided by serine 166, serine 167, glutamine 168, serine 194, aspartate 310, and lysine 337. Glutamine 168 is a binding site for phosphoenolpyruvate. Aspartate 310 acts as the Proton acceptor in catalysis. Positions 341, 382, and 407 each coordinate phosphoenolpyruvate.

The protein belongs to the EPSP synthase family. In terms of assembly, monomer.

Its subcellular location is the cytoplasm. The enzyme catalyses 3-phosphoshikimate + phosphoenolpyruvate = 5-O-(1-carboxyvinyl)-3-phosphoshikimate + phosphate. The protein operates within metabolic intermediate biosynthesis; chorismate biosynthesis. In terms of biological role, catalyzes the transfer of the enolpyruvyl moiety of phosphoenolpyruvate (PEP) to the 5-hydroxyl of shikimate-3-phosphate (S3P) to produce enolpyruvyl shikimate-3-phosphate and inorganic phosphate. This chain is 3-phosphoshikimate 1-carboxyvinyltransferase, found in Methanoregula boonei (strain DSM 21154 / JCM 14090 / 6A8).